Here is a 148-residue protein sequence, read N- to C-terminus: UPF0179 protein UNCMA_27840 (148 aa).

Belongs to the UPF0179 family.

The sequence is that of UPF0179 protein UNCMA_27840 from Methanocella arvoryzae (strain DSM 22066 / NBRC 105507 / MRE50).